The primary structure comprises 407 residues: MVNNNRPRRQRAQRVVVTTTQTAPVPQQNVPRNGRRRRNRTRRNRRRVRGMNMAALTRLSQPGLAFLKCAFAPPDFNTDPGKGIPDRFEGKVVSRKDVLNQSISFTAGQDTFILIAPTPGVAYWSASVPAGTFPTSATTFNPVNYPGFTSMFGTTSTSRSDQVSSFRYASMNVGIYPTSNLMQFAGSITVWKCPVKLSTVQFPVATDPATSSLVHTLVGLDGVLAVGPDNFSESFIKGVFSQSACNEPDFEFNDILEGIQTLPPANVSLGSTGQPFTMDSGAEATSGVVGWGNMDTIVIRVSAPEGAVNSAILKAWSCIEYRPNPNAMLYQFGHDSPPLDEVALQEYRTVARSLPVAVIAAQNASMWERVKSIIKSSLAAASNIPGPIGVAASGISGLSALFEGFGF.

A compositionally biased stretch (basic residues) spans 1–12 (MVNNNRPRRQRA). The interval 1-47 (MVNNNRPRRQRAQRVVVTTTQTAPVPQQNVPRNGRRRRNRTRRNRRR) is disordered. Positions 13–32 (QRVVVTTTQTAPVPQQNVPR) are enriched in low complexity. The span at 33 to 47 (NGRRRRNRTRRNRRR) shows a compositional bias: basic residues. A disulfide bond links C69 and C318. D75 is an active-site residue. Ca(2+) is bound by residues D161, D221, D249, E251, and G273.

The protein belongs to the peptidase A6 family. In terms of processing, capsid protein alpha autocatalytically maturates into capsid protein beta and peptide gamma.

The protein localises to the virion. It catalyses the reaction Hydrolysis of an asparaginyl bond involved in the maturation of the structural protein of the virus, typically -Asn-|-Ala- or -Asn-|-Phe-.. Functionally, capsid protein alpha self-assembles to form an icosahedral procapsid with a T=3 symmetry, about 30 nm in diameter, and consisting of 60 capsid proteins trimers. In addition, 240 calcium ions are incorporated per capsid during assembly. The capsid encapsulates the two genomic RNAs. Capsid maturation occurs via autoproteolytic cleavage of capsid protein alpha generating capsid protein beta and the membrane-active peptide gamma. In terms of biological role, membrane-permeabilizing peptide produced by virus maturation, thereby creating the infectious virion. After endocytosis into the host cell, peptide gamma is probably exposed in endosomes, where it permeabilizes the endosomal membrane, facilitating translocation of viral capsid or RNA into the cytoplasm. Involved in specific recognition and packaging of viral RNA during assembly. The sequence is that of Capsid protein alpha (alpha) from Costelytra zealandica (Greater wax moth).